A 506-amino-acid chain; its full sequence is Exoglucanase (506 aa).

An N-terminal signal peptide occupies residues 1 to 18; the sequence is MFPRSILLALSLTAVALG. The segment at 19–450 is catalytic; sequence QQVGTNMAEN…IKFGDINSTF (432 aa). Catalysis depends on Glu227, which acts as the Nucleophile. The active-site Proton donor is Glu232. The N-linked (GlcNAc...) asparagine glycan is linked to Asn308. Residues 405-426 are disordered; the sequence is ASPSQPGISRGTCSRDSGKPED. The span at 406 to 419 shows a compositional bias: polar residues; it reads SPSQPGISRGTCSR. Asn447 carries N-linked (GlcNAc...) asparagine glycosylation. Positions 449 to 472 are disordered; it reads TFNNNGGGGGNPSPTTTRPNSPAQ. Residues 451 to 473 are linker; the sequence is NNNGGGGGNPSPTTTRPNSPAQT. Residues 460-470 are compositionally biased toward low complexity; that stretch reads PSPTTTRPNSP. The CBM1 domain occupies 470–506; it reads PAQTMWGQCGGQGWTGPTACQSPSTCHVINDFYSQCF. Intrachain disulfides connect Cys478-Cys495 and Cys489-Cys505.

The protein belongs to the glycosyl hydrolase 7 (cellulase C) family.

The enzyme catalyses Hydrolysis of (1-&gt;4)-beta-D-glucosidic linkages in cellulose and cellotetraose, releasing cellobiose from the non-reducing ends of the chains.. Its function is as follows. The biological conversion of cellulose to glucose generally requires three types of hydrolytic enzymes: (1) Endoglucanases which cut internal beta-1,4-glucosidic bonds; (2) Exocellobiohydrolases that cut the disaccharide cellobiose from the non-reducing end of the cellulose polymer chain; (3) Beta-1,4-glucosidases which hydrolyze the cellobiose and other short cello-oligosaccharides to glucose. The polypeptide is Exoglucanase (cel2) (Agaricus bisporus (White button mushroom)).